Consider the following 556-residue polypeptide: Formate--tetrahydrofolate ligase (556 aa).

65–72 (TPAGEGKS) contributes to the ATP binding site.

The protein belongs to the formate--tetrahydrofolate ligase family.

It carries out the reaction (6S)-5,6,7,8-tetrahydrofolate + formate + ATP = (6R)-10-formyltetrahydrofolate + ADP + phosphate. It participates in one-carbon metabolism; tetrahydrofolate interconversion. In Streptococcus pneumoniae (strain ATCC 700669 / Spain 23F-1), this protein is Formate--tetrahydrofolate ligase.